The sequence spans 286 residues: MAELSLKKIYSGKVRDLYEIDDKRMLMVASDRLSAFDVILDDPIPHKGEILTQISNFWFKKLAHIMPNHFTGDSVYDVLPKAEADLLKDRAVVVKRLKPIKIESIVRGYLTGSGLKDYQQTGTICGLELPKGLVEAGKLPEPIFTPSSKEEVGDHDINISYAECERLIGKELAAQVRDAAIALYKEAAAYALTKGIIICDTKFEFGLDENGTLTLMDEVLTPDSSRFWSVDTYKEGTNPPSFDKQFVRDWLEQSGWNKQPPAPKVPAEVIEKTVAKYQEALDLLTK.

This sequence belongs to the SAICAR synthetase family.

It catalyses the reaction 5-amino-1-(5-phospho-D-ribosyl)imidazole-4-carboxylate + L-aspartate + ATP = (2S)-2-[5-amino-1-(5-phospho-beta-D-ribosyl)imidazole-4-carboxamido]succinate + ADP + phosphate + 2 H(+). It participates in purine metabolism; IMP biosynthesis via de novo pathway; 5-amino-1-(5-phospho-D-ribosyl)imidazole-4-carboxamide from 5-amino-1-(5-phospho-D-ribosyl)imidazole-4-carboxylate: step 1/2. This Actinobacillus succinogenes (strain ATCC 55618 / DSM 22257 / CCUG 43843 / 130Z) protein is Phosphoribosylaminoimidazole-succinocarboxamide synthase.